A 38-amino-acid polypeptide reads, in one-letter code: Photosystem I reaction center subunit IX (38 aa).

Residues 4–24 form a helical membrane-spanning segment; sequence FLTAAPVVAAIWFTATAGILI.

This sequence belongs to the PsaJ family.

Its subcellular location is the cellular thylakoid membrane. Its function is as follows. May help in the organization of the PsaE and PsaF subunits. The sequence is that of Photosystem I reaction center subunit IX from Synechococcus sp. (strain CC9605).